A 363-amino-acid chain; its full sequence is Ribonuclease P protein subunit p40 (363 aa).

As to quaternary structure, component of nuclear RNase P and RNase MRP ribonucleoproteins. RNase P consists of a catalytic RNA moiety and about 10 protein subunits; POP1, POP4, POP5, POP7, RPP14, RPP21, RPP25, RPP30, RPP38 and RPP40. Within the RNase P complex, POP1, POP7 and RPP25 form the 'finger' subcomplex, POP5, RPP14, RPP40 and homodimeric RPP30 form the 'palm' subcomplex, and RPP21, POP4 and RPP38 form the 'wrist' subcomplex. All subunits of the RNase P complex interact with the catalytic RNA. Several subunits of RNase P are also part of the RNase MRP complex. RNase MRP consists of a catalytic RNA moiety and about 8 protein subunits; POP1, POP7, RPP25, RPP30, RPP38, RPP40 and possibly also POP4 and POP5.

The protein localises to the nucleus. The protein resides in the nucleolus. In terms of biological role, component of ribonuclease P, a ribonucleoprotein complex that generates mature tRNA molecules by cleaving their 5'-ends. Also a component of the MRP ribonuclease complex, which cleaves pre-rRNA sequences. The protein is Ribonuclease P protein subunit p40 (Rpp40) of Rattus norvegicus (Rat).